Here is a 547-residue protein sequence, read N- to C-terminus: Probable acetolactate synthase (547 aa).

Residue E57 coordinates thiamine diphosphate. FAD-binding positions include P159 and 299–318; that span reads DRVE…LYGD. Positions 388-468 are thiamine pyrophosphate binding; the sequence is DFGSYAGRMI…VVSVIGNNGI (81 aa). Mg(2+) contacts are provided by D439 and N466.

It belongs to the TPP enzyme family. Mg(2+) serves as cofactor. It depends on thiamine diphosphate as a cofactor.

It carries out the reaction 2 pyruvate + H(+) = (2S)-2-acetolactate + CO2. The protein operates within amino-acid biosynthesis; L-isoleucine biosynthesis; L-isoleucine from 2-oxobutanoate: step 1/4. It participates in amino-acid biosynthesis; L-valine biosynthesis; L-valine from pyruvate: step 1/4. In Mycobacterium bovis (strain ATCC BAA-935 / AF2122/97), this protein is Probable acetolactate synthase (ilvG).